Consider the following 558-residue polypeptide: Formate--tetrahydrofolate ligase (558 aa).

67-74 (TPAGEGKT) is an ATP binding site.

The protein belongs to the formate--tetrahydrofolate ligase family.

It carries out the reaction (6S)-5,6,7,8-tetrahydrofolate + formate + ATP = (6R)-10-formyltetrahydrofolate + ADP + phosphate. The protein operates within one-carbon metabolism; tetrahydrofolate interconversion. The sequence is that of Formate--tetrahydrofolate ligase from Ruegeria sp. (strain TM1040) (Silicibacter sp.).